We begin with the raw amino-acid sequence, 263 residues long: Endonuclease 8 (263 aa).

Residue Pro2 is the Schiff-base intermediate with DNA of the active site. The Proton donor role is filled by Glu3. The active-site Proton donor; for beta-elimination activity is the Lys53. DNA is bound by residues Gln70, Arg125, and Asn169. Residues Lys229–His263 form an FPG-type zinc finger. The active-site Proton donor; for delta-elimination activity is the Arg253.

The protein belongs to the FPG family. The cofactor is Zn(2+).

It carries out the reaction 2'-deoxyribonucleotide-(2'-deoxyribose 5'-phosphate)-2'-deoxyribonucleotide-DNA = a 3'-end 2'-deoxyribonucleotide-(2,3-dehydro-2,3-deoxyribose 5'-phosphate)-DNA + a 5'-end 5'-phospho-2'-deoxyribonucleoside-DNA + H(+). Functionally, involved in base excision repair of DNA damaged by oxidation or by mutagenic agents. Acts as a DNA glycosylase that recognizes and removes damaged bases. Has a preference for oxidized pyrimidines, such as thymine glycol, 5,6-dihydrouracil and 5,6-dihydrothymine. Has AP (apurinic/apyrimidinic) lyase activity and introduces nicks in the DNA strand. Cleaves the DNA backbone by beta-delta elimination to generate a single-strand break at the site of the removed base with both 3'- and 5'-phosphates. The sequence is that of Endonuclease 8 from Escherichia coli (strain 55989 / EAEC).